We begin with the raw amino-acid sequence, 333 residues long: Sphingomyelinase C (333 aa).

Positions 1-26 are cleaved as a signal peptide; sequence MKGKLLKGVLSLGVGLGALYSGTSAQ. A disulfide bond links cysteine 150 and cysteine 186.

It belongs to the neutral sphingomyelinase family. Mg(2+) is required as a cofactor. The N-terminus is blocked.

The protein localises to the secreted. The enzyme catalyses a sphingomyelin + H2O = phosphocholine + an N-acylsphing-4-enine + H(+). Its activity is regulated as follows. Activated by cobalt and manganese ions. In terms of biological role, required, with sphingomyelinase, to effect target cell lysis (hemolysis). The polypeptide is Sphingomyelinase C (cerB) (Bacillus cereus).